The following is a 343-amino-acid chain: Ribosomal RNA small subunit methyltransferase H (343 aa).

Residues 39–41, aspartate 58, phenylalanine 87, aspartate 108, and glutamine 115 contribute to the S-adenosyl-L-methionine site; that span reads AGH.

The protein belongs to the methyltransferase superfamily. RsmH family.

The protein resides in the cytoplasm. The catalysed reaction is cytidine(1402) in 16S rRNA + S-adenosyl-L-methionine = N(4)-methylcytidine(1402) in 16S rRNA + S-adenosyl-L-homocysteine + H(+). Functionally, specifically methylates the N4 position of cytidine in position 1402 (C1402) of 16S rRNA. In Bifidobacterium adolescentis (strain ATCC 15703 / DSM 20083 / NCTC 11814 / E194a), this protein is Ribosomal RNA small subunit methyltransferase H.